The primary structure comprises 93 residues: Small ribosomal subunit protein uS19 (93 aa).

It belongs to the universal ribosomal protein uS19 family.

Protein S19 forms a complex with S13 that binds strongly to the 16S ribosomal RNA. The sequence is that of Small ribosomal subunit protein uS19 from Mycolicibacterium smegmatis (strain ATCC 700084 / mc(2)155) (Mycobacterium smegmatis).